A 342-amino-acid polypeptide reads, in one-letter code: DDB1- and CUL4-associated factor 7 (342 aa).

7 WD repeats span residues 6-52, 60-100, 108-150, 165-206, 213-252, 257-296, and 303-342; these read KRKE…LVGL, ICRN…VWRV, ECLL…IWGL, HVKT…MFDL, TIIY…ILDV, TPVA…IWDI, and IEDP…ILRV.

Belongs to the WD repeat DCAF7 family. Interacts with DYRK1A, DYRK1B and DIAPH1. Interacts with DDB1. Interacts with ZNF703. Interacts with human adenovirus 5 E1A protein.

Its subcellular location is the cytoplasm. It localises to the nucleus. It participates in protein modification; protein ubiquitination. Involved in craniofacial development. Acts upstream of the EDN1 pathway and is required for formation of the upper jaw equivalent, the palatoquadrate. The activity required for EDN1 pathway function differs between the first and second arches. Associates with DIAPH1 and controls GLI1 transcriptional activity. Could be involved in normal and disease skin development. May function as a substrate receptor for CUL4-DDB1 E3 ubiquitin-protein ligase complex. The chain is DDB1- and CUL4-associated factor 7 (DCAF7) from Homo sapiens (Human).